Here is a 282-residue protein sequence, read N- to C-terminus: MATEHAPTASEYVVHHLTHLNSTGHAQTSIVDFSVINVDSMFYSVLLGLLTVFLLWLAARKATAGVPGRFQGFVELLVEMVADQAKGIIHSAESRKFVAPLALTVFVWIFLMNAMDMLPVDLLPRIWEGVYASAGGDPHHAYMRVVPTADLSATLGMSCGVLLLCLYYNVKIKGVSGWVHELFTAPFGSHPLLYPINFAMQIIEFVAKTVSHGMRLFGNMYAGELIFILIALLGSTATVFGFVGHIVAGSIWAIFHILIITLQAFIFMMLTLVYIGQAHEGH.

The next 6 helical transmembrane spans lie at 38–58, 97–117, 145–165, 187–207, 225–247, and 261–281; these read VDSMFYSVLLGLLTVFLLWLA, FVAPLALTVFVWIFLMNAMDM, VVPTADLSATLGMSCGVLLLC, FGSHPLLYPINFAMQIIEFVA, LIFILIALLGSTATVFGFVGHIV, and TLQAFIFMMLTLVYIGQAHEG.

Belongs to the ATPase A chain family. In terms of assembly, F-type ATPases have 2 components, CF(1) - the catalytic core - and CF(0) - the membrane proton channel. CF(1) has five subunits: alpha(3), beta(3), gamma(1), delta(1), epsilon(1). CF(0) has three main subunits: a(1), b(2) and c(9-12). The alpha and beta chains form an alternating ring which encloses part of the gamma chain. CF(1) is attached to CF(0) by a central stalk formed by the gamma and epsilon chains, while a peripheral stalk is formed by the delta and b chains.

Its subcellular location is the cell inner membrane. Functionally, key component of the proton channel; it plays a direct role in the translocation of protons across the membrane. The sequence is that of ATP synthase subunit a from Azoarcus sp. (strain BH72).